A 445-amino-acid polypeptide reads, in one-letter code: tRNA-2-methylthio-N(6)-dimethylallyladenosine synthase (445 aa).

The MTTase N-terminal domain maps to 2–122 (KKAFVKSYGC…LPDLLARSRE (121 aa)). Cys-11, Cys-47, Cys-85, Cys-157, Cys-161, and Cys-164 together coordinate [4Fe-4S] cluster. Residues 143–378 (RTLGASAFLT…LDSQRHAYQR (236 aa)) enclose the Radical SAM core domain. Residues 378–440 (RAAAGRVFDV…SNSLFGELVS (63 aa)) enclose the TRAM domain.

It belongs to the methylthiotransferase family. MiaB subfamily. As to quaternary structure, monomer. The cofactor is [4Fe-4S] cluster.

Its subcellular location is the cytoplasm. It catalyses the reaction N(6)-dimethylallyladenosine(37) in tRNA + (sulfur carrier)-SH + AH2 + 2 S-adenosyl-L-methionine = 2-methylsulfanyl-N(6)-dimethylallyladenosine(37) in tRNA + (sulfur carrier)-H + 5'-deoxyadenosine + L-methionine + A + S-adenosyl-L-homocysteine + 2 H(+). Its function is as follows. Catalyzes the methylthiolation of N6-(dimethylallyl)adenosine (i(6)A), leading to the formation of 2-methylthio-N6-(dimethylallyl)adenosine (ms(2)i(6)A) at position 37 in tRNAs that read codons beginning with uridine. The chain is tRNA-2-methylthio-N(6)-dimethylallyladenosine synthase from Methylobacterium radiotolerans (strain ATCC 27329 / DSM 1819 / JCM 2831 / NBRC 15690 / NCIMB 10815 / 0-1).